A 484-amino-acid chain; its full sequence is tRNA sulfurtransferase (484 aa).

The region spanning 63–167 (EAFGERLACI…NEQLYLVDKR (105 aa)) is the THUMP domain. ATP is bound by residues 185–186 (LI), Lys-267, Gly-289, and Gln-298. Cys-346 and Cys-458 are disulfide-bonded. The region spanning 406-484 (ISADEVIIDV…GYSNVKVYRP (79 aa)) is the Rhodanese domain. The active-site Cysteine persulfide intermediate is the Cys-458.

It belongs to the ThiI family.

The protein resides in the cytoplasm. It carries out the reaction [ThiI sulfur-carrier protein]-S-sulfanyl-L-cysteine + a uridine in tRNA + 2 reduced [2Fe-2S]-[ferredoxin] + ATP + H(+) = [ThiI sulfur-carrier protein]-L-cysteine + a 4-thiouridine in tRNA + 2 oxidized [2Fe-2S]-[ferredoxin] + AMP + diphosphate. It catalyses the reaction [ThiS sulfur-carrier protein]-C-terminal Gly-Gly-AMP + S-sulfanyl-L-cysteinyl-[cysteine desulfurase] + AH2 = [ThiS sulfur-carrier protein]-C-terminal-Gly-aminoethanethioate + L-cysteinyl-[cysteine desulfurase] + A + AMP + 2 H(+). The protein operates within cofactor biosynthesis; thiamine diphosphate biosynthesis. Functionally, catalyzes the ATP-dependent transfer of a sulfur to tRNA to produce 4-thiouridine in position 8 of tRNAs, which functions as a near-UV photosensor. Also catalyzes the transfer of sulfur to the sulfur carrier protein ThiS, forming ThiS-thiocarboxylate. This is a step in the synthesis of thiazole, in the thiamine biosynthesis pathway. The sulfur is donated as persulfide by IscS. The polypeptide is tRNA sulfurtransferase (Shewanella piezotolerans (strain WP3 / JCM 13877)).